The following is a 930-amino-acid chain: APC membrane recruitment protein 1 (930 aa).

Disordered stretches follow at residues 1–33 (MEIA…PPSV), 55–76 (FFGG…TKSQ), 104–133 (CSEP…LFSS), 161–193 (TVPG…NQTT), 222–245 (EMDK…RQEG), and 366–454 (EVCY…PRDS). Residues 222-242 (EMDKRRRAEEEGIGEDEKTGR) show a composition bias toward basic and acidic residues. Composition is skewed to polar residues over residues 377–399 (DSPS…SSPM) and 413–424 (SPQSDRQESVPN). Residues 439 to 452 (EESRERPHQERLPR) are compositionally biased toward basic and acidic residues.

This sequence belongs to the Amer family.

The protein resides in the cytoplasm. It localises to the cell membrane. It is found in the nucleus. Regulator of the canonical Wnt signaling pathway. Acts by specifically binding phosphatidylinositol 4,5-bisphosphate (PtdIns(4,5)P2), translocating to the cell membrane and interacting with key regulators of the canonical Wnt signaling pathway, such as components of the beta-catenin destruction complex. Acts both as a positive and negative regulator of the Wnt signaling pathway, depending on the context. The protein is APC membrane recruitment protein 1 (amer1) of Danio rerio (Zebrafish).